The primary structure comprises 533 residues: Fimbrial subunit type 1 (533 aa).

Positions M1 to A30 are cleaved as a signal peptide. The short motif at L496–G500 is the LPXTG sorting signal element. Residue T499 is modified to Pentaglycyl murein peptidoglycan amidated threonine. Residues G500 to H533 constitute a propeptide, removed by sortase.

It localises to the secreted. The protein resides in the cell wall. It is found in the fimbrium. Its function is as follows. Major fimbrial subunit of A.viscosus. In Actinomyces viscosus, this protein is Fimbrial subunit type 1.